A 509-amino-acid chain; its full sequence is 2-isopropylmalate synthase (509 aa).

Residues 5 to 267 (IQIFDTTLRD…QTALNLEETK (263 aa)) enclose the Pyruvate carboxyltransferase domain. Mn(2+) is bound by residues aspartate 14, histidine 202, histidine 204, and asparagine 238. The regulatory domain stretch occupies residues 391 to 509 (KLETLQLQYV…AAENVEKVGN (119 aa)).

This sequence belongs to the alpha-IPM synthase/homocitrate synthase family. LeuA type 1 subfamily. In terms of assembly, homodimer. Requires Mn(2+) as cofactor.

The protein resides in the cytoplasm. It carries out the reaction 3-methyl-2-oxobutanoate + acetyl-CoA + H2O = (2S)-2-isopropylmalate + CoA + H(+). It participates in amino-acid biosynthesis; L-leucine biosynthesis; L-leucine from 3-methyl-2-oxobutanoate: step 1/4. Functionally, catalyzes the condensation of the acetyl group of acetyl-CoA with 3-methyl-2-oxobutanoate (2-ketoisovalerate) to form 3-carboxy-3-hydroxy-4-methylpentanoate (2-isopropylmalate). In Staphylococcus aureus (strain MW2), this protein is 2-isopropylmalate synthase.